Reading from the N-terminus, the 219-residue chain is GTP-binding nuclear protein GSP1/CNR1 (219 aa).

The residue at position 2 (Ser2) is an N-acetylserine. Ser2 is modified (phosphoserine). The region spanning 9–173 is the Small GTPase Ran-type domain; sequence EVPTFKLVLV…LWLARKLAGN (165 aa). 20–27 serves as a coordination point for GTP; the sequence is DGGTGKTT. The interval 39 to 47 is switch-I; that stretch reads KKYIATIGV. GTP-binding positions include Gly70, 124–127, and 152–154; these read NKVD and SAK. Residues 70 to 86 form a switch-II region; the sequence is GQEKFGGLRDGYYINAQ.

It belongs to the small GTPase superfamily. Ran family. In terms of assembly, found in a nuclear export complex with RanGTP, exportin and pre-miRNA. Forms a complex with YRB1. Interacts with BUD5, CEX1, RRP12, SRM1, and DIS3/RRP44.

The protein localises to the nucleus. GTP-binding protein involved in nucleocytoplasmic transport. Required for the import of protein into the nucleus and also for RNA export. Essential for cell viability. By analogy with Ras, Ran may be activated when GTP is exchanged for bound GDP by RCC1 and inactivated when GTP is hydrolyzed by Ran upon activation by RanGAP1. The polypeptide is GTP-binding nuclear protein GSP1/CNR1 (GSP1) (Saccharomyces cerevisiae (strain ATCC 204508 / S288c) (Baker's yeast)).